A 288-amino-acid polypeptide reads, in one-letter code: ATP synthase gamma chain (288 aa).

This sequence belongs to the ATPase gamma chain family. F-type ATPases have 2 components, CF(1) - the catalytic core - and CF(0) - the membrane proton channel. CF(1) has five subunits: alpha(3), beta(3), gamma(1), delta(1), epsilon(1). CF(0) has three main subunits: a, b and c.

The protein resides in the cell membrane. Functionally, produces ATP from ADP in the presence of a proton gradient across the membrane. The gamma chain is believed to be important in regulating ATPase activity and the flow of protons through the CF(0) complex. The protein is ATP synthase gamma chain of Staphylococcus aureus (strain Mu3 / ATCC 700698).